Here is a 210-residue protein sequence, read N- to C-terminus: MDDEEETYRLWKIRKTIMQLCHDRGYLVTQDELDQTLEEFKAQFGDKPSEGRPRRTDLTVLVAHNDDPTDQMFVFFPEEPKVGIKTIKVYCQRMQEENITRALIVVQQGMTPSAKQSLVDMAPKYVLEQFLQQELLINITEHELVPEHVVMTKEEVTELLARYKLRESQLPRIQAGDPVARYFGIKRGQVVKIIRPSETAGRYITYRLVQ.

Met-1 carries the post-translational modification N-acetylmethionine. A Glycyl lysine isopeptide (Lys-Gly) (interchain with G-Cter in SUMO2) cross-link involves residue Lys-81.

This sequence belongs to the archaeal Rpo5/eukaryotic RPB5 RNA polymerase subunit family. As to quaternary structure, component of the RNA polymerase I (Pol I), RNA polymerase II (Pol II) and RNA polymerase III (Pol III) complexes consisting of at least 13, 12 and 17 subunits, respectively. Pol I complex consists of a ten-subunit catalytic core composed of POLR1A/RPA1, POLR1B/RPA2, POLR1C/RPAC1, POLR1D/RPAC2, POLR1H/RPA12, POLR2E/RPABC1, POLR2F/RPABC2, POLR2H/RPABC3, POLR2K/RPABC4 and POLR2L/RPABC5; a mobile stalk subunit POLR1F/RPA43 protruding from the core and additional subunits homologous to general transcription factors POLR1E/RPA49 and POLR1G/RPA34. Part of Pol I pre-initiation complex (PIC), in which Pol I core assembles with RRN3 and promoter-bound UTBF and SL1/TIF-IB complex. Pol II complex contains a ten-subunit catalytic core composed of POLR2A/RPB1, POLR2B/RPB2, POLR2C/RPB3, POLR2I/RPB9, POLR2J/RPB11, POLR2E/RPABC1, POLR2F/RPABC2, POLR2H/RPABC3, POLR2K/RPABC4 and POLR2L/RPABC5 and a mobile stalk composed of two subunits POLR2D/RPB4 and POLR2G/RPB7. Part of Pol II(G) complex, in which Pol II core associates with an additional subunit POLR2M; unlike conventional Pol II, Pol II(G) functions as a transcriptional repressor. Part of TBP-based Pol II pre-initiation complex (PIC), in which Pol II core assembles with general transcription factors and other specific initiation factors including GTF2E1, GTF2E2, GTF2F1, GTF2F2, TCEA1, ERCC2, ERCC3, GTF2H2, GTF2H3, GTF2H4, GTF2H5, GTF2A1, GTF2A2, GTF2B and TBP; this large multi-subunit PIC complex mediates DNA unwinding and targets Pol II core to the transcription start site where the first phosphodiester bond forms. In Pol II complex, this subunit is present in 2-fold molar excess over the other subunits. Pol III complex consists of a ten-subunit catalytic core composed of POLR3A/RPC1, POLR3B/RPC2, POLR1C/RPAC1, POLR1D/RPAC2, POLR3K/RPC10, POLR2E/RPABC1, POLR2F/RPABC2, POLR2H/RPABC3, POLR2K/RPABC4 and POLR2L/RPABC5; a mobile stalk composed of two subunits POLR3H/RPC8 and CRCP/RPC9, protruding from the core and functioning primarily in transcription initiation; and additional subunits homologous to general transcription factors of the RNA polymerase II machinery, POLR3C/RPC3-POLR3F/RPC6-POLR3G/RPC7 heterotrimer required for transcription initiation and POLR3D/RPC4-POLR3E/RPC5 heterodimer involved in both transcription initiation and termination. Component of the PAQosome complex which is responsible for the biogenesis of several protein complexes and which consists of R2TP complex members RUVBL1, RUVBL2, RPAP3 and PIH1D1, URI complex members PFDN2, PFDN6, PDRG1, UXT and URI1 as well as ASDURF, POLR2E and DNAAF10/WDR92. Interacts with URI1.

The protein localises to the nucleus. It localises to the nucleolus. Its function is as follows. DNA-dependent RNA polymerase catalyzes the transcription of DNA into RNA using the four ribonucleoside triphosphates as substrates. Common component of RNA polymerases I, II and III which synthesize ribosomal RNA precursors, mRNA precursors and many functional non-coding RNAs, and small RNAs, such as 5S rRNA and tRNAs, respectively. Pol II is the central component of the basal RNA polymerase II transcription machinery. Pols are composed of mobile elements that move relative to each other. In Pol II, POLR2E/RPABC1 is part of the lower jaw surrounding the central large cleft and thought to grab the incoming DNA template. Seems to be the major component in this process. The polypeptide is DNA-directed RNA polymerases I, II, and III subunit RPABC1 (Mus musculus (Mouse)).